A 330-amino-acid polypeptide reads, in one-letter code: Membrane progestin receptor gamma (330 aa).

The Cytoplasmic portion of the chain corresponds to 1-51; that stretch reads MLSLKLPRLFRIDQVPQVFHEQGILFGYRHPQSSATACILSLFQMTNETLN. Residues 52 to 72 form a helical membrane-spanning segment; the sequence is IWTHLLPFWFFVWRFMTALYV. Topologically, residues 73-81 are extracellular; that stretch reads TDIQNDSYS. A helical membrane pass occupies residues 82 to 101; it reads WPMLVYMCTSCVYPLASSCA. Residues 102-113 are Cytoplasmic-facing; the sequence is HTFSSMSKNARH. A helical transmembrane segment spans residues 114–134; that stretch reads ICYFLDYGAVNLFSLGSAIAY. Residues 135–141 lie on the Extracellular side of the membrane; that stretch reads SAYTFPD. The helical transmembrane segment at 142-162 threads the bilayer; the sequence is ALVCSTFHECYVALAVLNTIL. The Cytoplasmic portion of the chain corresponds to 163 to 186; the sequence is STGLSCYSRFLELQKPRLCKLLRV. A helical transmembrane segment spans residues 187 to 207; it reads LAFAYPYTWDSLPIFYRLFLF. Residues 208–253 lie on the Extracellular side of the membrane; it reads PGESSRNEAMLYHQKHMGMTLLASFFYSAHLPERLAPGRFDYIGHS. The chain crosses the membrane as a helical span at residues 254 to 274; that stretch reads HQLFHVCVILATHLQMEAILL. Over 275-294 the chain is Cytoplasmic; sequence DKTLRREWLLATSRPFSFPQ. A helical transmembrane segment spans residues 295 to 315; that stretch reads IAAAMLLCIIFSLSNIIYFSA. Residues 316 to 330 lie on the Extracellular side of the membrane; the sequence is ALYRIPEPELHEKET.

Belongs to the ADIPOR family.

It localises to the cell membrane. Functionally, plasma membrane progesterone (P4) receptor coupled to G proteins. Seems to act through a G(i) mediated pathway. May be involved in oocyte maturation. In Mus musculus (Mouse), this protein is Membrane progestin receptor gamma.